We begin with the raw amino-acid sequence, 87 residues long: Small ribosomal subunit protein uS17 (87 aa).

The protein belongs to the universal ribosomal protein uS17 family. In terms of assembly, part of the 30S ribosomal subunit.

One of the primary rRNA binding proteins, it binds specifically to the 5'-end of 16S ribosomal RNA. This chain is Small ribosomal subunit protein uS17, found in Geobacillus sp. (strain WCH70).